Reading from the N-terminus, the 421-residue chain is Protein PHLOEM UNLOADING MODULATOR (421 aa).

A run of 7 helical transmembrane segments spans residues 30–50 (LMPV…LFYK), 60–80 (IPFL…ALCV), 124–144 (HIIG…SVVF), 158–178 (YIFT…STIL), 286–306 (AMAW…LFVA), 323–343 (CIVA…IWSA), and 397–417 (TVFA…ALTL).

The protein belongs to the sphingomyelin synthase family.

The protein resides in the membrane. Its pathway is sphingolipid metabolism. In terms of biological role, catalyzes the biosynthesis of sphingolipids with very long-chain fatty acid (VLCFA). Required for the formation of plasmodesmal cytoplasmic sleeve during the transition from type I to type II plasmodesmata to modulate post-sieve elements (SE) unloading and symplastic cell-to-cell molecular trafficking at the phloem pole pericycle (PPP)-endodermis interface in roots. The polypeptide is Protein PHLOEM UNLOADING MODULATOR (Arabidopsis thaliana (Mouse-ear cress)).